A 317-amino-acid chain; its full sequence is Ribosomal protein L11 methyltransferase (317 aa).

Residues Thr-162, Gly-183, Asp-205, and Asn-248 each coordinate S-adenosyl-L-methionine.

It belongs to the methyltransferase superfamily. PrmA family.

It is found in the cytoplasm. It catalyses the reaction L-lysyl-[protein] + 3 S-adenosyl-L-methionine = N(6),N(6),N(6)-trimethyl-L-lysyl-[protein] + 3 S-adenosyl-L-homocysteine + 3 H(+). Its function is as follows. Methylates ribosomal protein L11. In Alkaliphilus metalliredigens (strain QYMF), this protein is Ribosomal protein L11 methyltransferase.